An 807-amino-acid polypeptide reads, in one-letter code: Glycerol-3-phosphate acyltransferase (807 aa).

The HXXXXD motif motif lies at Cys308–Met313.

The protein belongs to the GPAT/DAPAT family.

The protein localises to the cell inner membrane. It catalyses the reaction sn-glycerol 3-phosphate + an acyl-CoA = a 1-acyl-sn-glycero-3-phosphate + CoA. It functions in the pathway phospholipid metabolism; CDP-diacylglycerol biosynthesis; CDP-diacylglycerol from sn-glycerol 3-phosphate: step 1/3. In Shewanella frigidimarina (strain NCIMB 400), this protein is Glycerol-3-phosphate acyltransferase.